The sequence spans 292 residues: 4-hydroxy-tetrahydrodipicolinate synthase (292 aa).

T45 contributes to the pyruvate binding site. Y133 (proton donor/acceptor) is an active-site residue. The Schiff-base intermediate with substrate role is filled by K162. A pyruvate-binding site is contributed by I204.

The protein belongs to the DapA family. Homotetramer; dimer of dimers.

The protein resides in the cytoplasm. The enzyme catalyses L-aspartate 4-semialdehyde + pyruvate = (2S,4S)-4-hydroxy-2,3,4,5-tetrahydrodipicolinate + H2O + H(+). Its pathway is amino-acid biosynthesis; L-lysine biosynthesis via DAP pathway; (S)-tetrahydrodipicolinate from L-aspartate: step 3/4. Its function is as follows. Catalyzes the condensation of (S)-aspartate-beta-semialdehyde [(S)-ASA] and pyruvate to 4-hydroxy-tetrahydrodipicolinate (HTPA). In Oleidesulfovibrio alaskensis (strain ATCC BAA-1058 / DSM 17464 / G20) (Desulfovibrio alaskensis), this protein is 4-hydroxy-tetrahydrodipicolinate synthase.